We begin with the raw amino-acid sequence, 469 residues long: 3-isopropylmalate dehydratase large subunit (469 aa).

Cys347, Cys408, and Cys411 together coordinate [4Fe-4S] cluster.

Belongs to the aconitase/IPM isomerase family. LeuC type 1 subfamily. Heterodimer of LeuC and LeuD. The cofactor is [4Fe-4S] cluster.

It carries out the reaction (2R,3S)-3-isopropylmalate = (2S)-2-isopropylmalate. It participates in amino-acid biosynthesis; L-leucine biosynthesis; L-leucine from 3-methyl-2-oxobutanoate: step 2/4. Functionally, catalyzes the isomerization between 2-isopropylmalate and 3-isopropylmalate, via the formation of 2-isopropylmaleate. The polypeptide is 3-isopropylmalate dehydratase large subunit (Histophilus somni (strain 129Pt) (Haemophilus somnus)).